The chain runs to 1907 residues: Chromatin modification-related protein EAF1 B (1907 aa).

Disordered stretches follow at residues 108 to 208 (ASPH…TDLV), 261 to 287 (NRVS…GSKT), 323 to 373 (GGSP…SHAN), and 449 to 469 (NQSH…ETEK). Over residues 140–151 (SENKSVEGERNL) the composition is skewed to basic and acidic residues. 3 stretches are compositionally biased toward polar residues: residues 261–270 (NRVSSNSLNT), 333–342 (GQKNSSTQLN), and 355–372 (TNRG…SSHA). In terms of domain architecture, HSA spans 563-641 (CGTAPVEVRE…LSYAILQFWS (79 aa)). 2 disordered regions span residues 836–909 (SSSL…AVQK) and 928–952 (AETS…TWHL). Over residues 856–866 (RRVRTASRHRV) the composition is skewed to basic residues. Polar residues-rich tracts occupy residues 884–898 (TDAS…QDEY) and 942–952 (QGSAYDQTWHL). Residues 1049–1105 (SGNPWSLFEDQALVVLVHDMGPNWELISDAMNSTLKIKYIYRNPTECKDRHKILMDK) form the SANT domain. Disordered stretches follow at residues 1107–1131 (AGDG…PGIP), 1235–1266 (PVLP…GLQS), 1296–1319 (LSGR…DRGH), 1429–1465 (GHLS…QQEA), 1477–1594 (YLQQ…QQLN), 1638–1703 (VRPD…SPAT), 1767–1791 (VPQS…QASN), and 1824–1907 (VNNS…TKVE). Composition is skewed to polar residues over residues 1116 to 1125 (DSGNSQSYPS), 1242 to 1266 (AHPS…GLQS), 1296 to 1310 (LSGR…STPA), 1431 to 1444 (LSQQ…SHVL), and 1453 to 1462 (QSPSQATGAQ). Residues 1493-1512 (PHVQQPQGSSVSSSSQNSPQ) show a composition bias toward low complexity. Residues 1513–1529 (TQPPVSPQPLSMPPVSP) are compositionally biased toward pro residues. 8 stretches are compositionally biased toward polar residues: residues 1532–1545 (NINA…QKSQ), 1554–1568 (SPQS…QAGK), 1585–1594 (RQPTQGQQLN), 1640–1655 (PDQQ…TDLQ), 1662–1672 (PLSSNHSQQLP), 1681–1703 (PSPQ…SPAT), 1769–1782 (QSVT…SMGT), and 1824–1844 (VNNS…NQGL). Basic and acidic residues-rich tracts occupy residues 1863-1872 (SEEKRPKLPE) and 1882-1892 (LASEEQPHLEE).

It belongs to the EAF1 family. As to quaternary structure, component of the NuA4 histone acetyltransferase complex. Interacts with ARP4 and SWC4, and (via HSA domain) with TAF14 and TAF14B. In terms of tissue distribution, expressed in leaves.

The protein resides in the nucleus. Functionally, component of the NuA4 histone acetyltransferase complex which is involved in transcriptional activation of selected genes principally by acetylation of nucleosomal histone H4 and H2A. In Arabidopsis thaliana (Mouse-ear cress), this protein is Chromatin modification-related protein EAF1 B (EAF1B).